A 445-amino-acid chain; its full sequence is Methylphloroacetophenone oxidase (445 aa).

Residues 25–45 traverse the membrane as a helical segment; sequence VLSIALIGVACAISIRSILYV. N51 carries an N-linked (GlcNAc...) asparagine glycan.

This sequence belongs to the cytochrome P450 family.

The protein localises to the membrane. The protein operates within secondary metabolite biosynthesis. In terms of biological role, methylphloroacetophenone oxidase; part of the gene cluster that mediates the biosynthesis of usnic acid, a dibenzofuran lichen product possessing a broad spectrum of biological activities. Two genes, mpas and mpao, comprise the usnic acid biosynthetic gene cluster with a single post-PKS enzyme, the methylphloracetophenone oxidase (mpao). The methylphloroacetophenone synthase (mpas) is a non-reducing polyketide synthase that produces methylphloracetophenone from acetate via a methylated tetraketide intermediate. The methylphloroacetophenone oxidase then carries out the oxidative dimerization of methylphloracetophenone to usnic acid. This Cladonia uncialis (Cup lichen) protein is Methylphloroacetophenone oxidase.